The sequence spans 514 residues: uncharacterized protein (514 aa).

3 disordered regions span residues Met1–Glu68, Val109–Ser244, and Arg272–Cys484. Over residues Lys368–Arg384 the composition is skewed to basic residues. A compositionally biased stretch (basic and acidic residues) spans Lys385–Pro405.

This is an uncharacterized protein from Homo sapiens (Human).